Consider the following 215-residue polypeptide: Fibroblast growth factor 17 (215 aa).

Residues 1–22 (MYGINQRYLYISFHFFVVWCHA) form the signal peptide. The N-linked (GlcNAc...) asparagine glycan is linked to Asn-137.

Belongs to the heparin-binding growth factors family.

The protein localises to the secreted. In terms of biological role, involved in dorsal-ventral embryonic patterning, by promoting expression of bone morphogenetic protein (BMP) antagonists such as chd. Also involved in anterior-posterior neural patterning and in mesoderm induction. The sequence is that of Fibroblast growth factor 17 (fgf17) from Danio rerio (Zebrafish).